The chain runs to 289 residues: Acetyl-coenzyme A carboxylase carboxyl transferase subunit beta (289 aa).

The region spanning 28–289 (LWSKCPSCEA…ALLQKLPAAA (262 aa)) is the CoA carboxyltransferase N-terminal domain. 4 residues coordinate Zn(2+): Cys32, Cys35, Cys51, and Cys54. Residues 32–54 (CPSCEAVLYATDLENNLQVCPKC) form a C4-type zinc finger.

It belongs to the AccD/PCCB family. In terms of assembly, acetyl-CoA carboxylase is a heterohexamer composed of biotin carboxyl carrier protein (AccB), biotin carboxylase (AccC) and two subunits each of ACCase subunit alpha (AccA) and ACCase subunit beta (AccD). Zn(2+) serves as cofactor.

The protein resides in the cytoplasm. It carries out the reaction N(6)-carboxybiotinyl-L-lysyl-[protein] + acetyl-CoA = N(6)-biotinyl-L-lysyl-[protein] + malonyl-CoA. The protein operates within lipid metabolism; malonyl-CoA biosynthesis; malonyl-CoA from acetyl-CoA: step 1/1. Its function is as follows. Component of the acetyl coenzyme A carboxylase (ACC) complex. Biotin carboxylase (BC) catalyzes the carboxylation of biotin on its carrier protein (BCCP) and then the CO(2) group is transferred by the transcarboxylase to acetyl-CoA to form malonyl-CoA. The polypeptide is Acetyl-coenzyme A carboxylase carboxyl transferase subunit beta (Dechloromonas aromatica (strain RCB)).